Reading from the N-terminus, the 158-residue chain is NAD(P)H-quinone oxidoreductase subunit J, chloroplastic (158 aa).

It belongs to the complex I 30 kDa subunit family. As to quaternary structure, NDH is composed of at least 16 different subunits, 5 of which are encoded in the nucleus.

It localises to the plastid. It is found in the chloroplast thylakoid membrane. It catalyses the reaction a plastoquinone + NADH + (n+1) H(+)(in) = a plastoquinol + NAD(+) + n H(+)(out). The enzyme catalyses a plastoquinone + NADPH + (n+1) H(+)(in) = a plastoquinol + NADP(+) + n H(+)(out). NDH shuttles electrons from NAD(P)H:plastoquinone, via FMN and iron-sulfur (Fe-S) centers, to quinones in the photosynthetic chain and possibly in a chloroplast respiratory chain. The immediate electron acceptor for the enzyme in this species is believed to be plastoquinone. Couples the redox reaction to proton translocation, and thus conserves the redox energy in a proton gradient. The protein is NAD(P)H-quinone oxidoreductase subunit J, chloroplastic of Olimarabidopsis pumila (Dwarf rocket).